Reading from the N-terminus, the 186-residue chain is Ribosome-recycling factor (186 aa).

The protein belongs to the RRF family.

It is found in the cytoplasm. Functionally, responsible for the release of ribosomes from messenger RNA at the termination of protein biosynthesis. May increase the efficiency of translation by recycling ribosomes from one round of translation to another. The protein is Ribosome-recycling factor of Chlorobium limicola (strain DSM 245 / NBRC 103803 / 6330).